The chain runs to 241 residues: Caffeoyl-CoA O-methyltransferase (241 aa).

Position 14 (lysine 14) interacts with substrate. Residues threonine 58, glutamate 80, 82-83, serine 88, aspartate 106, and alanine 135 contribute to the S-adenosyl-L-methionine site; that span reads GV. A substrate-binding site is contributed by aspartate 158. Aspartate 158 serves as a coordination point for a divalent metal cation. An S-adenosyl-L-methionine-binding site is contributed by aspartate 160. Positions 184 and 185 each coordinate a divalent metal cation.

This sequence belongs to the class I-like SAM-binding methyltransferase superfamily. Cation-dependent O-methyltransferase family. CCoAMT subfamily. It depends on a divalent metal cation as a cofactor.

It catalyses the reaction (E)-caffeoyl-CoA + S-adenosyl-L-methionine = (E)-feruloyl-CoA + S-adenosyl-L-homocysteine + H(+). It participates in aromatic compound metabolism; phenylpropanoid biosynthesis. Functionally, methylates caffeoyl-CoA to feruloyl-CoA and 5-hydroxyferuloyl-CoA to sinapoyl-CoA. Plays a role in the synthesis of feruloylated polysaccharides. Involved in the reinforcement of the plant cell wall. Also involved in the responding to wounding or pathogen challenge by the increased formation of cell wall-bound ferulic acid polymers. In Stellaria longipes (Longstalk starwort), this protein is Caffeoyl-CoA O-methyltransferase.